The primary structure comprises 775 residues: Aconitate hydratase, mitochondrial (775 aa).

Residues 1–25 (MLTTLARASAMLLGARGFASAADLD) constitute a mitochondrion transit peptide. Substrate is bound by residues Gln-95 and 188-190 (DSH). An N-linked (GlcNAc...) asparagine glycan is attached at Asn-337. Cys-381 lines the [4Fe-4S] cluster pocket. Asn-383 carries N-linked (GlcNAc...) asparagine glycosylation. [4Fe-4S] cluster contacts are provided by Cys-444 and Cys-447. A substrate-binding site is contributed by Arg-470. Asn-471 carries an N-linked (GlcNAc...) asparagine glycan. Positions 475 and 603 each coordinate substrate. Residue Asn-608 is glycosylated (N-linked (GlcNAc...) asparagine). 666 to 667 (SR) serves as a coordination point for substrate. 2 N-linked (GlcNAc...) asparagine glycosylation sites follow: Asn-754 and Asn-763.

The protein belongs to the aconitase/IPM isomerase family. As to quaternary structure, monomer. [4Fe-4S] cluster is required as a cofactor.

Its subcellular location is the mitochondrion. The enzyme catalyses citrate = D-threo-isocitrate. It functions in the pathway carbohydrate metabolism; tricarboxylic acid cycle; isocitrate from oxaloacetate: step 2/2. Its function is as follows. Catalyzes the isomerization of citrate to isocitrate via cis-aconitate. The chain is Aconitate hydratase, mitochondrial from Arthroderma benhamiae (strain ATCC MYA-4681 / CBS 112371) (Trichophyton mentagrophytes).